We begin with the raw amino-acid sequence, 140 residues long: Small ribosomal subunit protein bS16 (140 aa).

Positions 86 to 140 are disordered; the sequence is TVGKAKQAAKREEEAKQAAKEAAEAKAAAEAEAAAAAEAAKAEDAPDGETESSEG. A compositionally biased stretch (basic and acidic residues) spans 94-114; the sequence is AKREEEAKQAAKEAAEAKAAA. Low complexity predominate over residues 115-124; the sequence is EAEAAAAAEA. A compositionally biased stretch (acidic residues) spans 130 to 140; it reads APDGETESSEG.

Belongs to the bacterial ribosomal protein bS16 family.

This is Small ribosomal subunit protein bS16 from Parasynechococcus marenigrum (strain WH8102).